Reading from the N-terminus, the 387-residue chain is Transcription termination/antitermination protein NusA (387 aa).

An S1 motif domain is found at 145 to 209 (GQVLTGVVTR…AKGPSLLVSR (65 aa)). Residues 312–379 (AKKARVKVTK…ARERKAREEF (68 aa)) form the KH domain.

It belongs to the NusA family. Monomer. Binds directly to the core enzyme of the DNA-dependent RNA polymerase and to nascent RNA.

Its subcellular location is the cytoplasm. In terms of biological role, participates in both transcription termination and antitermination. This Thermus thermophilus (strain ATCC 27634 / DSM 579 / HB8) protein is Transcription termination/antitermination protein NusA.